Consider the following 235-residue polypeptide: Uridylate kinase (235 aa).

9-12 contacts ATP; the sequence is KLSG. The tract at residues 17–22 is involved in allosteric activation by GTP; sequence GDQGYG. Gly51 contacts UMP. Residues Gly52 and Arg56 each contribute to the ATP site. Residues Asp71 and 132–139 contribute to the UMP site; that span reads CGNPFFTT. Positions 159, 165, and 168 each coordinate ATP.

It belongs to the UMP kinase family. As to quaternary structure, homohexamer.

It is found in the cytoplasm. The catalysed reaction is UMP + ATP = UDP + ADP. It participates in pyrimidine metabolism; CTP biosynthesis via de novo pathway; UDP from UMP (UMPK route): step 1/1. Its activity is regulated as follows. Allosterically activated by GTP. Inhibited by UTP. Functionally, catalyzes the reversible phosphorylation of UMP to UDP. In Synechococcus sp. (strain WH7803), this protein is Uridylate kinase.